A 434-amino-acid polypeptide reads, in one-letter code: Glutamate-1-semialdehyde 2,1-aminomutase (434 aa).

Position 270 is an N6-(pyridoxal phosphate)lysine (K270).

The protein belongs to the class-III pyridoxal-phosphate-dependent aminotransferase family. HemL subfamily. As to quaternary structure, homodimer. The cofactor is pyridoxal 5'-phosphate.

The protein localises to the cytoplasm. It carries out the reaction (S)-4-amino-5-oxopentanoate = 5-aminolevulinate. Its pathway is porphyrin-containing compound metabolism; protoporphyrin-IX biosynthesis; 5-aminolevulinate from L-glutamyl-tRNA(Glu): step 2/2. The protein is Glutamate-1-semialdehyde 2,1-aminomutase of Pelotomaculum thermopropionicum (strain DSM 13744 / JCM 10971 / SI).